The primary structure comprises 582 residues: uncharacterized protein (582 aa).

6 helical membrane passes run 17-37, 57-77, 131-151, 156-176, 239-259, and 271-291; these read VAML…LPTV, LGAV…GAVY, MTAT…IMAI, ALTW…YWII, ALML…LIWF, and VGSL…VLMA. One can recognise an ABC transmembrane type-1 domain in the interval 17-300; it reads VAMLMMLQLV…ATMTLAVLPR (284 aa). One can recognise an ABC transporter domain in the interval 335 to 571; sequence VRLAGATFTY…CPTYAEFAAS (237 aa). 369–376 lines the ATP pocket; sequence GSTGSGKS.

It belongs to the ABC transporter superfamily.

It is found in the cell membrane. This is an uncharacterized protein from Mycobacterium tuberculosis (strain CDC 1551 / Oshkosh).